A 271-amino-acid polypeptide reads, in one-letter code: GPN-loop GTPase 3 (271 aa).

13–18 (GVGKST) lines the GTP pocket. Residues 70 to 72 (GPN) carry the Gly-Pro-Asn (GPN)-loop; involved in dimer interface motif. 173 to 176 (SKMD) serves as a coordination point for GTP.

Belongs to the GPN-loop GTPase family. In terms of assembly, heterodimers with GPN1 or GPN2. Binds to RNA polymerase II (RNAPII).

Its function is as follows. Small GTPase required for proper nuclear import of RNA polymerase II and III (RNAPII and RNAPIII). May act at an RNAP assembly step prior to nuclear import. This chain is GPN-loop GTPase 3, found in Yarrowia lipolytica (strain CLIB 122 / E 150) (Yeast).